A 78-amino-acid polypeptide reads, in one-letter code: Large ribosomal subunit protein eL20 (78 aa).

Belongs to the eukaryotic ribosomal protein eL20 family. In terms of assembly, part of the 50S ribosomal subunit. Binds 23S rRNA.

The protein is Large ribosomal subunit protein eL20 of Pyrobaculum islandicum (strain DSM 4184 / JCM 9189 / GEO3).